Consider the following 377-residue polypeptide: cAMP-dependent protein kinase type II regulatory subunit (377 aa).

Residues 48-69 show a composition bias toward polar residues; it reads ERPSVSHTDQSTDDQLSVNSQD. Residues 48 to 78 form a disordered region; that stretch reads ERPSVSHTDQSTDDQLSVNSQDADAEPPVMA. Serine 51, serine 58, serine 64, serine 67, and serine 84 each carry phosphoserine. The short motif at 81 to 85 is the Pseudophosphorylation motif element; sequence RRKSV. A Phosphotyrosine modification is found at tyrosine 90. 3',5'-cyclic AMP contacts are provided by residues 124–239, glutamate 189, arginine 198, 242–362, glutamate 311, and arginine 320; these read LFRS…LLNS and MLKA…YESQ.

The protein belongs to the cAMP-dependent kinase regulatory chain family. In terms of assembly, tetramer, composed of 2 regulatory (R) and 2 catalytic (C) subunits. In the presence of cAMP it dissociates into 2 active monomeric C subunits and an R dimer. Interacts with Akap200. In terms of processing, the pseudophosphorylation site binds to the substrate-binding region of the catalytic chain but is not phosphorylated. The physiological significance of phosphorylations by other kinases is unclear. In terms of tissue distribution, detected in follicle cells, germline-derived cells, germline line stem cells and outer rim of ring canals of nurse cells throughout oogenesis (at protein level).

The protein localises to the cytoplasm. It is found in the cell membrane. In terms of biological role, regulatory subunit of the cAMP-dependent protein kinases involved in cAMP signaling in cells. Mediates membrane association by binding to anchoring proteins, such as Akap200. Might play an essential role in the regulation of neuronal activity in the brain. The chain is cAMP-dependent protein kinase type II regulatory subunit (Pka-R2) from Drosophila melanogaster (Fruit fly).